Reading from the N-terminus, the 214-residue chain is Protein-L-isoaspartate O-methyltransferase 1 (214 aa).

Ser62 is an active-site residue.

This sequence belongs to the methyltransferase superfamily. L-isoaspartyl/D-aspartyl protein methyltransferase family.

The protein localises to the cytoplasm. It carries out the reaction [protein]-L-isoaspartate + S-adenosyl-L-methionine = [protein]-L-isoaspartate alpha-methyl ester + S-adenosyl-L-homocysteine. In terms of biological role, catalyzes the methyl esterification of L-isoaspartyl residues in peptides and proteins that result from spontaneous decomposition of normal L-aspartyl and L-asparaginyl residues. It plays a role in the repair and/or degradation of damaged proteins. This chain is Protein-L-isoaspartate O-methyltransferase 1, found in Syntrophobacter fumaroxidans (strain DSM 10017 / MPOB).